Here is an 89-residue protein sequence, read N- to C-terminus: Small ribosomal subunit protein uS15 (89 aa).

Belongs to the universal ribosomal protein uS15 family. As to quaternary structure, part of the 30S ribosomal subunit. Forms a bridge to the 50S subunit in the 70S ribosome, contacting the 23S rRNA.

Its function is as follows. One of the primary rRNA binding proteins, it binds directly to 16S rRNA where it helps nucleate assembly of the platform of the 30S subunit by binding and bridging several RNA helices of the 16S rRNA. Forms an intersubunit bridge (bridge B4) with the 23S rRNA of the 50S subunit in the ribosome. This is Small ribosomal subunit protein uS15 from Acidiphilium cryptum (strain JF-5).